Consider the following 276-residue polypeptide: Homeobox protein TOS8 (276 aa).

Over residues 176 to 185 (NSVRGSNNGY) the composition is skewed to polar residues. A disordered region spans residues 176 to 199 (NSVRGSNNGYSAKEKKHKAHGKRS). Basic residues predominate over residues 189 to 199 (EKKHKAHGKRS). Residues 194 to 256 (AHGKRSNLPK…NARRRKIFSG (63 aa)) constitute a DNA-binding region (homeobox; TALE-type).

Belongs to the TALE/CUP9 homeobox family.

It localises to the nucleus. The polypeptide is Homeobox protein TOS8 (TOS8) (Saccharomyces cerevisiae (strain ATCC 204508 / S288c) (Baker's yeast)).